A 487-amino-acid chain; its full sequence is MEATKSSKQNCCNPVKKPGPVSIDHVLLALRETREERDLRIRSLFSFFDSENVGYLDCAQIEKGLCALQIPSGYKYAKELFRVCDANRDGRVDYHEFRRYMDDKELELYRIFQAIDVEHNGCISPEGLWDSLVKAGIEIKDEELARFVEHVDKDNDGIIMFEEWRDFLLLYPHEATIENIYHHWERVCLVDIGEQAVIPEGISKHIKRSNYFIAGGIAGAASRTATAPLDRLKVLLQIQKTDARIREAIKLIWKQGGVRGFFRGNGLNIVKVAPESAIKFYAYELFKNAIGENMGEDKADIGTTVRLFAGGMAGAVAQASIYPLDLVKTRLQTYTSQAGVAVPRLGTLTKDILVHEGPRAFYKGLFPSLLGIIPYAGIDLAAYETLKDLSRTYILQDAEPGPLVQLGCGTISGALGATCVYPLQVVRTRMQAERARTSMSGVFRRTISEEGYRALYKGLLPNLLKVVPAASITYMVYEAMKKSLELD.

The Mitochondrial intermembrane segment spans residues 1–211; the sequence is MEATKSSKQN…ISKHIKRSNY (211 aa). EF-hand domains lie at 36–71, 72–107, 108–138, and 139–174; these read ERDL…LQIP, SGYK…KELE, LYRI…AGIE, and IKDE…YPHE. Ca(2+) contacts are provided by Asp-85, Asn-87, Asp-89, Arg-91, and Glu-96. Positions 152, 154, 156, and 163 each coordinate Ca(2+). 3 Solcar repeats span residues 206 to 289, 301 to 389, and 400 to 483; these read IKRS…FKNA, IGTT…LKDL, and PGPL…MKKS. Residues 212 to 229 form a helical membrane-spanning segment; the sequence is FIAGGIAGAASRTATAPL. Topologically, residues 230–263 are mitochondrial matrix; sequence DRLKVLLQIQKTDARIREAIKLIWKQGGVRGFFR. A helical transmembrane segment spans residues 264–283; sequence GNGLNIVKVAPESAIKFYAY. Topologically, residues 284–310 are mitochondrial intermembrane; it reads ELFKNAIGENMGEDKADIGTTVRLFAG. Residues 311–324 form a helical membrane-spanning segment; it reads GMAGAVAQASIYPL. Over 325–363 the chain is Mitochondrial matrix; that stretch reads DLVKTRLQTYTSQAGVAVPRLGTLTKDILVHEGPRAFYK. A helical membrane pass occupies residues 364–383; the sequence is GLFPSLLGIIPYAGIDLAAY. At 384–405 the chain is on the mitochondrial intermembrane side; it reads ETLKDLSRTYILQDAEPGPLVQ. A helical transmembrane segment spans residues 406–423; the sequence is LGCGTISGALGATCVYPL. The Mitochondrial matrix portion of the chain corresponds to 424–457; sequence QVVRTRMQAERARTSMSGVFRRTISEEGYRALYK. The helical transmembrane segment at 458–477 threads the bilayer; it reads GLLPNLLKVVPAASITYMVY. Residues 478 to 487 lie on the Mitochondrial intermembrane side of the membrane; the sequence is EAMKKSLELD.

Belongs to the mitochondrial carrier (TC 2.A.29) family. In terms of tissue distribution, expressed in flowers, leaves, stems, roots and seedlings, mostly in aerial parts.

The protein localises to the mitochondrion inner membrane. Its activity is regulated as follows. Counter-exchange transport activity is saturable and inhibited by pyridoxal-5'-phosphate, EDTA and EGTA. Activated by calcium Ca(2+) and manganese Mn(2+) ions, and slightly by iron Fe(2+) and zinc Zn(2+) ions. Repressed by copper ions Cu(2+) and slightly by magnesium Mg(2+) ions. Magnesium Mg(2+) ions promotes slightly ATP uptake, ATP-Mg(2+) being exchanged with ATP(4-). Calcium-dependent mitochondrial carrier protein that catalyzes the import of ATP co-transported with metal divalent cations across the mitochondrial inner membrane in exchange for phosphate (Pi). Can transport phosphate, AMP, ADP, ATP, adenosine 5'-phosphosulfate, sulfate and thiosulfate, and, to a lesser extent, other nucleotides. Binds calcium ions Ca(2+). Also mediates calcium uptake. This Arabidopsis thaliana (Mouse-ear cress) protein is Calcium-dependent mitochondrial ATP-magnesium/phosphate carrier protein 2.